The following is a 539-amino-acid chain: Acid-sensing ion channel 4 (539 aa).

The Cytoplasmic portion of the chain corresponds to 1–68 (MPIEIVCKIK…GPGPHGLRRT (68 aa)). Residues 69-89 (LWVLALLTSLAAFLYQAASLA) traverse the membrane as a helical segment. Residues 90–438 (RGYLTRPHLV…EQRAAYGLSA (349 aa)) are Extracellular-facing. 2 cysteine pairs are disulfide-bonded: Cys118–Cys202 and Cys180–Cys187. 4 N-linked (GlcNAc...) asparagine glycosylation sites follow: Asn191, Asn243, Asn341, and Asn376. Intrachain disulfides connect Cys296–Cys375, Cys318–Cys371, Cys322–Cys369, Cys331–Cys353, and Cys333–Cys345. A helical transmembrane segment spans residues 439–459 (LLGDLGGQMGLFIGASILTLL). Residues 452–454 (GAS) carry the GAS motif; ion selectivity filter motif. The Cytoplasmic portion of the chain corresponds to 460–539 (EILDYIYEVS…PGSLFEDFAC (80 aa)). The interval 501 to 531 (EQSPCPNRGRAEGGGASNLLPNHHHPHGPPG) is disordered.

This sequence belongs to the amiloride-sensitive sodium channel (TC 1.A.6) family. ASIC4 subfamily. Homotrimer. Heterotrimer; with other ASIC proteins producing functional channels. Expressed in brain, spinal cord and dorsal root ganglion (DRG). Expressed by a subset of sensory neurons in the DRG. Expressed by granule cells in the cerebellar cortex. In hippocampus, expression is detected in dentate gyrus granule cells, in pyramidal cells of CA1-CA3 subfields and in interneurons of the striatum oriens and radiatum of all subfields. In cerebral cortex expressed in small, medium and large pyramidal cells in layers 2, 3 and 5 respectively. Also expressed in striatum, globus pallidus, inferior and superior calliculi, amygdala, magnocellular preoptic nucleus, islands of Calleja and large neurons of olfactory tubercules.

It localises to the cell membrane. Functionally, does not exhibit measurable stand-alone pH-gated sodium channel activity but may form pH-gated heterotrimeric sodium channels. Its activity could also depend on alternative gating mechanisms. This chain is Acid-sensing ion channel 4, found in Rattus norvegicus (Rat).